Here is a 108-residue protein sequence, read N- to C-terminus: Ig kappa chain V-V region MOPC 149 (108 aa).

The tract at residues 1–23 is framework-1; that stretch reads DIQMTQSPDYLSASVGETVTITC. A disulfide bond links cysteine 23 and cysteine 88. Residues 24–34 form a complementarity-determining-1 region; that stretch reads RASENIYSYLA. Residues 35–49 are framework-2; sequence WYQQKQGKSPQLLVY. The interval 50–56 is complementarity-determining-2; the sequence is DAKTLVE. Positions 57–88 are framework-3; the sequence is GVPSRFSGSGSGTQFSLKINSLQPEDFGSYYC. Residues 89 to 97 are complementarity-determining-3; that stretch reads QHHYGIPFT. The tract at residues 98–108 is framework-4; that stretch reads FGSGTKLEIKR.

The chain is Ig kappa chain V-V region MOPC 149 from Mus musculus (Mouse).